We begin with the raw amino-acid sequence, 128 residues long: Ribonuclease P protein component (128 aa).

Belongs to the RnpA family. As to quaternary structure, consists of a catalytic RNA component (M1 or rnpB) and a protein subunit.

It carries out the reaction Endonucleolytic cleavage of RNA, removing 5'-extranucleotides from tRNA precursor.. In terms of biological role, RNaseP catalyzes the removal of the 5'-leader sequence from pre-tRNA to produce the mature 5'-terminus. It can also cleave other RNA substrates such as 4.5S RNA. The protein component plays an auxiliary but essential role in vivo by binding to the 5'-leader sequence and broadening the substrate specificity of the ribozyme. This Parasynechococcus marenigrum (strain WH8102) protein is Ribonuclease P protein component.